Consider the following 331-residue polypeptide: 4-hydroxythreonine-4-phosphate dehydrogenase (331 aa).

Residues His-137 and Thr-138 each coordinate substrate. A divalent metal cation contacts are provided by His-167, His-212, and His-267. Substrate-binding residues include Lys-275, Asn-284, and Arg-293.

The protein belongs to the PdxA family. In terms of assembly, homodimer. Zn(2+) serves as cofactor. Requires Mg(2+) as cofactor. Co(2+) is required as a cofactor.

It is found in the cytoplasm. It carries out the reaction 4-(phosphooxy)-L-threonine + NAD(+) = 3-amino-2-oxopropyl phosphate + CO2 + NADH. The protein operates within cofactor biosynthesis; pyridoxine 5'-phosphate biosynthesis; pyridoxine 5'-phosphate from D-erythrose 4-phosphate: step 4/5. Catalyzes the NAD(P)-dependent oxidation of 4-(phosphooxy)-L-threonine (HTP) into 2-amino-3-oxo-4-(phosphooxy)butyric acid which spontaneously decarboxylates to form 3-amino-2-oxopropyl phosphate (AHAP). This Yersinia enterocolitica serotype O:8 / biotype 1B (strain NCTC 13174 / 8081) protein is 4-hydroxythreonine-4-phosphate dehydrogenase.